The following is a 266-amino-acid chain: MDLLKRHLAPIVPDAWSAIDEEAKEIFQGHLAGRKLVDFRGPFGWEYAAVNTGELRPIDDTPEDVDMKLRQVQPLAEVRVPFTLDVTELDSVARGATNPDLDDVARAAERMVEAEDSAIFHGWAQAGIKGIVDSTPHEALAVASVSDFPRAVLSAADTLRKAGVTGPYALVLGPKAYDDLFAATQDGYPVAKQVQRLVVDGPLVRANALAGALVMSMRGGDYELTVGQDLSIGYAFHDRSKVELFVAESFTFRVLEPGAAVHLRYA.

This sequence belongs to the encapsulin family. Family 1 subfamily. This encapsulin nanocompartment is formed by 60 subunits; monomers form 12 pentamers which assemble to form shells. Shells are loaded with 4 encapsulated ferritin-like protein decamers (EncFtn) in a tetrahedral arrangement. A 3 nm gap is consistently seen between the shell and the cargo.

The protein localises to the encapsulin nanocompartment. Its function is as follows. Shell component of a type 1 encapsulin nanocompartment. Assembles into proteinaceous shells about 21 nm in diameter. Small pores form at, or close to, the 2-, 3-, and 5-fold symmetry axes. Data analysis suggests the 5-fold pores open and close with maximal and minimal aperatures of 15 and 5 Angstroms. Cargo protein Fer (ferritin-like protein, probably stores iron) is targeted to the interior via its C-terminal extension; empty intact shells can be isolated in the absence of cargo protein. This Haliangium ochraceum (strain DSM 14365 / JCM 11303 / SMP-2) protein is Type 1 encapsulin shell protein.